A 253-amino-acid polypeptide reads, in one-letter code: Ribosomal RNA small subunit methyltransferase G (253 aa).

Residues glycine 84, phenylalanine 89, 135–136 (AE), and arginine 154 contribute to the S-adenosyl-L-methionine site. The tract at residues 228 to 253 (TPAKYPRREGVPTHQPLFWKAKEQSR) is disordered.

Belongs to the methyltransferase superfamily. RNA methyltransferase RsmG family.

It is found in the cytoplasm. Its function is as follows. Specifically methylates the N7 position of a guanine in 16S rRNA. The chain is Ribosomal RNA small subunit methyltransferase G from Deinococcus radiodurans (strain ATCC 13939 / DSM 20539 / JCM 16871 / CCUG 27074 / LMG 4051 / NBRC 15346 / NCIMB 9279 / VKM B-1422 / R1).